The chain runs to 330 residues: Low affinity immunoglobulin gamma Fc region receptor II (330 aa).

Residues 1 to 29 form the signal peptide; sequence MESNWTVHVFSRTLCHMLLWTAVLNLAAG. The Extracellular portion of the chain corresponds to 30-210; it reads THDLPKAVVK…QGPKSSRSLP (181 aa). Ig-like C2-type domains are found at residues 50-106 and 131-189; these read EDTV…QTRL and GETI…LGRT. 2 cysteine pairs are disulfide-bonded: Cys57–Cys99 and Cys138–Cys182. N-linked (GlcNAc...) asparagine glycans are attached at residues Asn65, Asn92, Asn166, and Asn173. A helical transmembrane segment spans residues 211–231; that stretch reads VLTIVAAVTGIAVAAIVIILV. The Cytoplasmic segment spans residues 232–330; the sequence is SLVYLKKKQV…ETEHDYQNHI (99 aa). The segment at 261–330 is disordered; the sequence is VGEYRQPSGG…ETEHDYQNHI (70 aa). Phosphotyrosine is present on Tyr290. The short motif at 307–312 is the ITIM motif element; the sequence is ITYSLL. Tyr309 is modified (phosphotyrosine; by SRC-type Tyr-kinases). Tyr326 carries the post-translational modification Phosphotyrosine.

In terms of assembly, interacts with FGR. Interacts with LYN. Post-translationally, glycosylated. When coaggregated to BCR, isoform IIB1 and isoform IIB1' become tyrosine phosphorylated and bind to the SH2 domains of the protein tyrosine phosphatase PTPC1. Phosphorylated by SRC-type Tyr-kinases such as LYN, BLK, FYN and SYK. Widely expressed by cells of hemopoietic origin. The isoforms are differentially expressed. Isoform IIB1 is preferentially expressed by cells of the lymphoid lineage, isoform IIB2 by cells of the myeloid lineage, and isoform IIB3 is released by macrophages and is present in the serum. Isoform IIB1' is expressed in myeloid and lymphoid cell lines, in normal spleen cells, and in resting or LPS-activated B-cells but is not detected in mesenteric lymph node cells.

It localises to the cell membrane. The protein resides in the cytoplasm. The protein localises to the cytoskeleton. Its subcellular location is the secreted. Receptor for the Fc region of complexed immunoglobulins gamma. Low affinity receptor. Involved in a variety of effector and regulatory functions such as phagocytosis of antigen-antibody complexes from the circulation and modulation of antibody production by B-cells. Isoform IIB1 and isoform IIB1' form caps but fail to mediate endocytosis or phagocytosis. Isoform IIB2 can mediate the endocytosis of soluble immune complexes via clathrin-coated pits. Isoform IIB1 and isoform IIB2 can down-regulate B-cell, T-cell, and mast cell activation when coaggregated to B-cell receptors for AG (BCR), T-cell receptors for AG (TCR), and Fc receptors, respectively. The chain is Low affinity immunoglobulin gamma Fc region receptor II (Fcgr2) from Mus musculus (Mouse).